The following is a 282-amino-acid chain: Diaminopimelate epimerase (282 aa).

3 residues coordinate substrate: asparagine 13, glutamine 45, and asparagine 64. Catalysis depends on cysteine 73, which acts as the Proton donor. Substrate is bound by residues 74–75 (GN), asparagine 155, asparagine 189, and 207–208 (ER). The active-site Proton acceptor is the cysteine 216. 217-218 (GS) contributes to the substrate binding site.

The protein belongs to the diaminopimelate epimerase family. Homodimer.

It is found in the cytoplasm. The catalysed reaction is (2S,6S)-2,6-diaminopimelate = meso-2,6-diaminopimelate. It participates in amino-acid biosynthesis; L-lysine biosynthesis via DAP pathway; DL-2,6-diaminopimelate from LL-2,6-diaminopimelate: step 1/1. Functionally, catalyzes the stereoinversion of LL-2,6-diaminopimelate (L,L-DAP) to meso-diaminopimelate (meso-DAP), a precursor of L-lysine and an essential component of the bacterial peptidoglycan. This is Diaminopimelate epimerase from Bartonella bacilliformis (strain ATCC 35685 / KC583 / Herrer 020/F12,63).